Here is a 176-residue protein sequence, read N- to C-terminus: Ribosome maturation factor RimM (176 aa).

The region spanning 97 to 176 is the PRC barrel domain; sequence EDEFYWRDLI…QILVDWDPDF (80 aa).

It belongs to the RimM family. Binds ribosomal protein uS19.

Its subcellular location is the cytoplasm. Its function is as follows. An accessory protein needed during the final step in the assembly of 30S ribosomal subunit, possibly for assembly of the head region. Essential for efficient processing of 16S rRNA. May be needed both before and after RbfA during the maturation of 16S rRNA. It has affinity for free ribosomal 30S subunits but not for 70S ribosomes. The protein is Ribosome maturation factor RimM of Shewanella oneidensis (strain ATCC 700550 / JCM 31522 / CIP 106686 / LMG 19005 / NCIMB 14063 / MR-1).